The sequence spans 358 residues: Peptide chain release factor 1 (358 aa).

At Q233 the chain carries N5-methylglutamine.

Belongs to the prokaryotic/mitochondrial release factor family. Methylated by PrmC. Methylation increases the termination efficiency of RF1.

The protein localises to the cytoplasm. Peptide chain release factor 1 directs the termination of translation in response to the peptide chain termination codons UAG and UAA. This Clostridium botulinum (strain Okra / Type B1) protein is Peptide chain release factor 1.